We begin with the raw amino-acid sequence, 348 residues long: Ion-translocating oxidoreductase complex subunit D (348 aa).

3 consecutive transmembrane segments (helical) span residues 25–45, 68–88, and 124–144; these read ILAA…GTFI, PISP…IGVA, and AMAA…TWAA. T182 is subject to FMN phosphoryl threonine. The next 5 membrane-spanning stretches (helical) occupy residues 211-231, 237-257, 263-283, 296-316, and 317-337; these read TGEG…FLLA, WHIS…GFGA, ASPL…FIAT, LLFG…GGYP, and DGVA…DYYI.

Belongs to the NqrB/RnfD family. As to quaternary structure, the complex is composed of six subunits: RnfA, RnfB, RnfC, RnfD, RnfE and RnfG. It depends on FMN as a cofactor.

The protein localises to the cell inner membrane. Its function is as follows. Part of a membrane-bound complex that couples electron transfer with translocation of ions across the membrane. The chain is Ion-translocating oxidoreductase complex subunit D from Shewanella amazonensis (strain ATCC BAA-1098 / SB2B).